We begin with the raw amino-acid sequence, 481 residues long: MRRLTVRLFTAVLAALALLTMGTPAHATAPASPSVTFTNPLAEKRADPHIFKHTDGYYYFTATVPEYDRIVLRRATTLQGLATAPETTIWTKHASGVMGAHIWAPEIHFIDGKWYVYFAAGSTSDVWAIRMYVLESGAANPLTGSWTEKGQIATPVSSFSLDATTFVVNGVRHLAWAQRNPAEDNNTSLFIAKMANPWTISGTPTEISQPTLSWETVGYKVNEGPAVIQHGGKVFLTYSASATDANYCLGMLSASASADLLNAASWTKSSQPVFKTSEATGQYGPGHNSFTVSEDGKSDILVYHDRNYKDISGDPLNDPNRRTRLQKVYWNADGTPNFGIPVADGVTPVRFSSYNYPDRYIRHWDFRARIEANVTNLADSQFRVVTGLAGSGTISLESANYPGYYLRHKNYEVWVEKNDGSSAFKNDASFSRRAGLADSADGIAFESYNYPGRYLRHYENLLRIQPVSTALDRQDATFYAE.

The N-terminal stretch at 1 to 27 is a signal peptide; sequence MRRLTVRLFTAVLAALALLTMGTPAHA. Positions 37–336 are catalytic; that stretch reads FTNPLAEKRA…KVYWNADGTP (300 aa). The active-site Proton acceptor is aspartate 47. Residue asparagine 186 coordinates substrate. Glutamate 223 acts as the Proton donor in catalysis. Substrate is bound by residues histidine 287, arginine 321, 363–366, aspartate 379, 457–460, and aspartate 475; these read HWDF and HYEN. Residues 349-479 form an ABD region; the sequence is VRFSSYNYPD…ALDRQDATFY (131 aa).

This sequence belongs to the glycosyl hydrolase 43 family.

Its subcellular location is the secreted. The catalysed reaction is Hydrolysis of terminal non-reducing alpha-L-arabinofuranoside residues in alpha-L-arabinosides.. Its pathway is glycan metabolism; L-arabinan degradation. In terms of biological role, involved in the degradation of arabinan and is a key enzyme in the complete degradation of the plant cell wall. Catalyzes only the cleavage of terminal alpha-(1-&gt;5) arabinofuranosyl bonds of arabinan present in the arabinofuranosyl polysaccharides or oligosaccharides. It cannot act on other arabinose-containing polysaccharides and arabinoxylo-oligosaccharides. The protein is Extracellular exo-alpha-(1-&gt;5)-L-arabinofuranosidase of Streptomyces avermitilis (strain ATCC 31267 / DSM 46492 / JCM 5070 / NBRC 14893 / NCIMB 12804 / NRRL 8165 / MA-4680).